The chain runs to 326 residues: Phospho-N-acetylmuramoyl-pentapeptide-transferase (326 aa).

9 consecutive transmembrane segments (helical) span residues 3 to 23 (ISIS…PAFI), 51 to 71 (TMGG…FALF), 79 to 99 (VGMI…DDFL), 115 to 135 (LALQ…GGDI), 138 to 158 (VFGY…FWLV), 169 to 189 (GVDG…GVIA), 195 to 215 (MDIL…FIFN), 221 to 243 (VFMG…MALH), and 306 to 326 (FFFW…LYLM).

It belongs to the glycosyltransferase 4 family. MraY subfamily. Requires Mg(2+) as cofactor.

It localises to the cell membrane. The enzyme catalyses UDP-N-acetyl-alpha-D-muramoyl-L-alanyl-gamma-D-glutamyl-L-lysyl-D-alanyl-D-alanine + di-trans,octa-cis-undecaprenyl phosphate = Mur2Ac(oyl-L-Ala-gamma-D-Glu-L-Lys-D-Ala-D-Ala)-di-trans,octa-cis-undecaprenyl diphosphate + UMP. The protein operates within cell wall biogenesis; peptidoglycan biosynthesis. Its function is as follows. Catalyzes the initial step of the lipid cycle reactions in the biosynthesis of the cell wall peptidoglycan: transfers peptidoglycan precursor phospho-MurNAc-pentapeptide from UDP-MurNAc-pentapeptide onto the lipid carrier undecaprenyl phosphate, yielding undecaprenyl-pyrophosphoryl-MurNAc-pentapeptide, known as lipid I. This chain is Phospho-N-acetylmuramoyl-pentapeptide-transferase, found in Streptococcus pneumoniae serotype 2 (strain D39 / NCTC 7466).